The chain runs to 143 residues: Cofilin/actin-depolymerizing factor homolog 2 (143 aa).

Residues 4-141 (GVKVSDECVY…FEDELRTIIL (138 aa)) enclose the ADF-H domain.

It belongs to the actin-binding proteins ADF family. In terms of assembly, interacts with monomeric actin, does not bind to actin polymers.

The protein resides in the cytoplasm. The protein localises to the cytoskeleton. In terms of biological role, not involved in actin polymerisation, instead functions to stimulate nucleotide exchange on monomeric actin and influence turnover of the small amount of cytosolic actin microfilaments. Essential for erythrocytic schizogony. The sequence is that of Cofilin/actin-depolymerizing factor homolog 2 from Plasmodium falciparum (isolate 3D7).